Consider the following 134-residue polypeptide: ATP synthase epsilon chain (134 aa).

This sequence belongs to the ATPase epsilon chain family. In terms of assembly, F-type ATPases have 2 components, CF(1) - the catalytic core - and CF(0) - the membrane proton channel. CF(1) has five subunits: alpha(3), beta(3), gamma(1), delta(1), epsilon(1). CF(0) has three main subunits: a, b and c.

The protein localises to the cell membrane. In terms of biological role, produces ATP from ADP in the presence of a proton gradient across the membrane. In Clostridium botulinum (strain Alaska E43 / Type E3), this protein is ATP synthase epsilon chain.